The following is a 141-amino-acid chain: VLSSKDKANIKTAFGKIGGHAADYGAEALERMFLGFPTTKTYFPHFDLSHGSAQVKAHGKKVGDALTKAADHLDDLPSALSALSDLHAHKLRVDPVNFKLLSHCLLVTVAAHHPGDFTPAVHASLDKFLANVSTVLTSKYR.

The Globin domain occupies 1–141 (VLSSKDKANI…VSTVLTSKYR (141 aa)). S3 is subject to Phosphoserine. Residues K7 and K11 each carry the N6-succinyllysine modification. An N6-acetyllysine; alternate modification is found at K16. An N6-succinyllysine; alternate modification is found at K16. Y24 is subject to Phosphotyrosine. K40 is modified (N6-succinyllysine). Residue S49 is modified to Phosphoserine. H58 provides a ligand contact to O2. Residue H87 coordinates heme b. A Phosphoserine modification is found at S102. T108 carries the phosphothreonine modification. S124 is modified (phosphoserine). A phosphothreonine mark is found at T134 and T137. S138 is modified (phosphoserine).

Belongs to the globin family. In terms of assembly, heterotetramer of two alpha chains and two beta chains. Red blood cells.

Involved in oxygen transport from the lung to the various peripheral tissues. Functionally, hemopressin acts as an antagonist peptide of the cannabinoid receptor CNR1. Hemopressin-binding efficiently blocks cannabinoid receptor CNR1 and subsequent signaling. The chain is Hemoglobin subunit alpha (HBA) from Vicugna pacos (Alpaca).